Consider the following 382-residue polypeptide: Apolipoprotein A-IV (382 aa).

A signal peptide spans 1–20; it reads MFLKAVVLSLALVAVTGARA. Repeat copies occupy residues 33–54, 60–81, 82–103, 115–136, 137–158, 159–180, 181–202, 203–224, 225–246, 247–268, 269–286, 287–308, and 309–330. The interval 33-330 is 13 X 22 AA approximate tandem repeats; sequence DYFSQLGSNA…QVEDLRQKLG (298 aa). The disordered stretch occupies residues 361–382; the sequence is EASQGQSQALPAQEKAQAPLEG.

The protein belongs to the apolipoprotein A1/A4/E family. Homodimer. Secreted in plasma.

The protein localises to the secreted. May have a role in chylomicrons and VLDL secretion and catabolism. Required for efficient activation of lipoprotein lipase by ApoC-II; potent activator of LCAT. Apoa-IV is a major component of HDL and chylomicrons. The protein is Apolipoprotein A-IV (APOA4) of Sus scrofa (Pig).